We begin with the raw amino-acid sequence, 322 residues long: 2-methylene-furan-3-one reductase (322 aa).

NADP(+)-binding positions include K59, 174 to 175, 197 to 200, Y215, I253, 264 to 266, and 311 to 312; these read GV, STKK, FVL, and RA. Substrate is bound at residue K59.

Belongs to the zinc-containing alcohol dehydrogenase family. Quinone oxidoreductase subfamily. In terms of assembly, monomer.

It catalyses the reaction 4-hydroxy-2,5-dimethyl-furan-3(2H)-one + NADP(+) = 4-hydroxy-5-methyl-2-methylenefuran-3(2H)-one + NADPH + H(+). In terms of biological role, enone oxidoreductase involved in the biosynthesis of 4-hydroxy-2,5-dimethyl-3(2H)-furanone (HDMF or furaneol), the key flavor compound in strawberries. In Fragaria vesca (Woodland strawberry), this protein is 2-methylene-furan-3-one reductase (EO).